Here is a 620-residue protein sequence, read N- to C-terminus: Chaperone protein HscA homolog (620 aa).

It belongs to the heat shock protein 70 family.

In terms of biological role, chaperone involved in the maturation of iron-sulfur cluster-containing proteins. Has a low intrinsic ATPase activity which is markedly stimulated by HscB. In Shewanella baltica (strain OS195), this protein is Chaperone protein HscA homolog.